A 365-amino-acid chain; its full sequence is Carbamoyl phosphate synthase small chain (365 aa).

2 CPSase regions span residues 1-166 (MKRQ…PSPG) and 1-169 (MKRQ…GRGH). Serine 45, glycine 218, and glycine 220 together coordinate L-glutamine. The region spanning 170-357 (RVVLVDFGMK…LTMIENFKKE (188 aa)) is the Glutamine amidotransferase type-1 domain. Cysteine 245 acts as the Nucleophile in catalysis. Residues leucine 246, glutamine 249, asparagine 287, glycine 289, and tyrosine 290 each contribute to the L-glutamine site. Catalysis depends on residues histidine 330 and glutamate 332.

It belongs to the CarA family. In terms of assembly, composed of two chains; the small (or glutamine) chain promotes the hydrolysis of glutamine to ammonia, which is used by the large (or ammonia) chain to synthesize carbamoyl phosphate. Tetramer of heterodimers (alpha,beta)4.

It carries out the reaction hydrogencarbonate + L-glutamine + 2 ATP + H2O = carbamoyl phosphate + L-glutamate + 2 ADP + phosphate + 2 H(+). The catalysed reaction is L-glutamine + H2O = L-glutamate + NH4(+). It functions in the pathway amino-acid biosynthesis; L-arginine biosynthesis; carbamoyl phosphate from bicarbonate: step 1/1. The protein operates within pyrimidine metabolism; UMP biosynthesis via de novo pathway; (S)-dihydroorotate from bicarbonate: step 1/3. Its function is as follows. Small subunit of the glutamine-dependent carbamoyl phosphate synthetase (CPSase). CPSase catalyzes the formation of carbamoyl phosphate from the ammonia moiety of glutamine, carbonate, and phosphate donated by ATP, constituting the first step of 2 biosynthetic pathways, one leading to arginine and/or urea and the other to pyrimidine nucleotides. The small subunit (glutamine amidotransferase) binds and cleaves glutamine to supply the large subunit with the substrate ammonia. In Bacillus cereus (strain ATCC 10987 / NRS 248), this protein is Carbamoyl phosphate synthase small chain.